A 562-amino-acid chain; its full sequence is Apyrase (562 aa).

The signal sequence occupies residues 1–24; sequence MAGRPGYSEVIFLYVVSVAVIARA. Residues Asp47, His49, and Asp98 each contribute to the a divalent metal cation site. A glycan (N-linked (GlcNAc...) asparagine) is linked at Asn112. The a divalent metal cation site is built by Asn130, His233, and His257. Arg370 lines the AMP pocket. N-linked (GlcNAc...) asparagine glycosylation is present at Asn390. Positions 405, 424, and 514 each coordinate AMP.

Belongs to the 5'-nucleotidase family. As to quaternary structure, (Microbial infection) Interacts with Zika virus envelope protein E and Zika virus-like particles; the interaction does not affect Zika virus replication in human endothelial cells and keratinocytes. A divalent metal cation serves as cofactor. Post-translationally, the N-terminus is blocked. As to expression, female saliva (at protein level). Female salivary gland (at protein level). Not detected or low-level expression in female carcasses without salivary glands. Not detected in male tissues.

The protein resides in the secreted. The catalysed reaction is a ribonucleoside 5'-triphosphate + 2 H2O = a ribonucleoside 5'-phosphate + 2 phosphate + 2 H(+). Functionally, facilitates hematophagy by preventing ADP-, collagen- and thrombin-dependent platelet aggregation in the host. Cleaves adenosine triphosphate (ATP) and adenosine diphosphate (ADP) to adenosine monophosphate (AMP) and inorganic phosphate. May reduce probing time by facilitating the speed of locating blood. (Microbial infection) Does not affect Zika virus replication in human endothelial cells and keratinocytes. The sequence is that of Apyrase from Aedes aegypti (Yellowfever mosquito).